The primary structure comprises 59 residues: Protein translocase subunit SecE (59 aa).

The chain crosses the membrane as a helical span at residues 39-59 (VMALFLGLIDALFVALLSFFF).

The protein belongs to the SecE/SEC61-gamma family. Component of the Sec protein translocase complex. Heterotrimer consisting of SecY, SecE and SecG subunits. The heterotrimers can form oligomers, although 1 heterotrimer is thought to be able to translocate proteins. Interacts with the ribosome. Interacts with SecDF, and other proteins may be involved. Interacts with SecA.

It is found in the cell inner membrane. Its function is as follows. Essential subunit of the Sec protein translocation channel SecYEG. Clamps together the 2 halves of SecY. May contact the channel plug during translocation. The sequence is that of Protein translocase subunit SecE from Treponema pallidum (strain Nichols).